The primary structure comprises 177 residues: ATP synthase subunit delta (177 aa).

This sequence belongs to the ATPase delta chain family. F-type ATPases have 2 components, F(1) - the catalytic core - and F(0) - the membrane proton channel. F(1) has five subunits: alpha(3), beta(3), gamma(1), delta(1), epsilon(1). F(0) has three main subunits: a(1), b(2) and c(10-14). The alpha and beta chains form an alternating ring which encloses part of the gamma chain. F(1) is attached to F(0) by a central stalk formed by the gamma and epsilon chains, while a peripheral stalk is formed by the delta and b chains.

It is found in the cell membrane. Functionally, f(1)F(0) ATP synthase produces ATP from ADP in the presence of a proton or sodium gradient. F-type ATPases consist of two structural domains, F(1) containing the extramembraneous catalytic core and F(0) containing the membrane proton channel, linked together by a central stalk and a peripheral stalk. During catalysis, ATP synthesis in the catalytic domain of F(1) is coupled via a rotary mechanism of the central stalk subunits to proton translocation. Its function is as follows. This protein is part of the stalk that links CF(0) to CF(1). It either transmits conformational changes from CF(0) to CF(1) or is implicated in proton conduction. The sequence is that of ATP synthase subunit delta from Exiguobacterium sibiricum (strain DSM 17290 / CCUG 55495 / CIP 109462 / JCM 13490 / 255-15).